A 95-amino-acid chain; its full sequence is Co-chaperonin GroES (95 aa).

Belongs to the GroES chaperonin family. In terms of assembly, heptamer of 7 subunits arranged in a ring. Interacts with the chaperonin GroEL.

The protein localises to the cytoplasm. Its function is as follows. Together with the chaperonin GroEL, plays an essential role in assisting protein folding. The GroEL-GroES system forms a nano-cage that allows encapsulation of the non-native substrate proteins and provides a physical environment optimized to promote and accelerate protein folding. GroES binds to the apical surface of the GroEL ring, thereby capping the opening of the GroEL channel. This chain is Co-chaperonin GroES, found in Stenotrophomonas maltophilia (strain K279a).